The chain runs to 273 residues: Anthranilate synthase beta subunit 2, chloroplastic (273 aa).

The transit peptide at 1–36 directs the protein to the chloroplast; the sequence is MAATTLYNSCLLQPKYGFTTRRLNQSLVNSLTNPTR. The Glutamine amidotransferase type-1 domain occupies 71–270; that stretch reads PIIVIDNYDS…IKLVEKKESE (200 aa). C149 serves as the catalytic Nucleophile. Active-site residues include H244 and E246.

As to quaternary structure, heterotetramer consisting of two non-identical subunits: a beta subunit and a large alpha subunit.

Its subcellular location is the plastid. The protein resides in the chloroplast. The enzyme catalyses chorismate + L-glutamine = anthranilate + pyruvate + L-glutamate + H(+). It functions in the pathway amino-acid biosynthesis; L-tryptophan biosynthesis; L-tryptophan from chorismate: step 1/5. Its activity is regulated as follows. Feedback inhibition by tryptophan. Its function is as follows. Part of a heterotetrameric complex that catalyzes the two-step biosynthesis of anthranilate, an intermediate in the biosynthesis of L-tryptophan. In the first step, the glutamine-binding beta subunit of anthranilate synthase (AS) provides the glutamine amidotransferase activity which generates ammonia as a substrate that, along with chorismate, is used in the second step, catalyzed by the large alpha subunit of AS to produce anthranilate. The protein is Anthranilate synthase beta subunit 2, chloroplastic (ASB2) of Arabidopsis thaliana (Mouse-ear cress).